A 740-amino-acid polypeptide reads, in one-letter code: DNA-directed RNA polymerase subunit beta' (740 aa).

Residues cysteine 65, cysteine 67, cysteine 103, and cysteine 106 each contribute to the Zn(2+) site. 3 residues coordinate Mg(2+): aspartate 539, aspartate 541, and aspartate 543.

The protein belongs to the RNA polymerase beta' chain family. RpoC1 subfamily. As to quaternary structure, in plastids the minimal PEP RNA polymerase catalytic core is composed of four subunits: alpha, beta, beta', and beta''. When a (nuclear-encoded) sigma factor is associated with the core the holoenzyme is formed, which can initiate transcription. The cofactor is Mg(2+). It depends on Zn(2+) as a cofactor.

The protein localises to the plastid. The protein resides in the chloroplast. The enzyme catalyses RNA(n) + a ribonucleoside 5'-triphosphate = RNA(n+1) + diphosphate. In terms of biological role, DNA-dependent RNA polymerase catalyzes the transcription of DNA into RNA using the four ribonucleoside triphosphates as substrates. The protein is DNA-directed RNA polymerase subunit beta' of Ostreococcus tauri.